We begin with the raw amino-acid sequence, 557 residues long: Protein NRT1/ PTR FAMILY 5.14 (557 aa).

2 helical membrane passes run 35–55 (AALF…GIGS) and 78–98 (AWSG…DAFL). Residue threonine 103 is modified to Phosphothreonine. The next 10 helical transmembrane spans lie at 104-124 (IIIS…SAFL), 133-153 (SSTS…VAIG), 183-203 (FFNW…LVVV), 209-229 (FSWA…LVLF), 320-340 (IPVW…MTFF), 357-377 (IPPA…VPIY), 401-421 (IGTG…VEFK), 443-463 (IWWL…TLVG), 479-499 (IGLA…SLLI), and 526-546 (YFYW…LFIS).

It belongs to the major facilitator superfamily. Proton-dependent oligopeptide transporter (POT/PTR) (TC 2.A.17) family. As to expression, expressed in roots.

Its subcellular location is the membrane. The chain is Protein NRT1/ PTR FAMILY 5.14 (NPF5.14) from Arabidopsis thaliana (Mouse-ear cress).